The primary structure comprises 144 residues: Thyrostimulin alpha-2 subunit (144 aa).

Positions 1–41 (MGRRDSGRAVAQRYRGVTRGVTVIACLMVVCACVGLCDATG) are cleaved as a signal peptide. 4 cysteine pairs are disulfide-bonded: C52-C107, C66-C121, C76-C136, and C80-C138.

This sequence belongs to the glycoprotein hormones subunit alpha family. Heterodimer with GPHB5; non-covalently-linked. Expressed by the venom duct.

It localises to the secreted. In Conus victoriae (Queen Victoria cone), this protein is Thyrostimulin alpha-2 subunit.